The sequence spans 187 residues: Elongation factor P (187 aa).

It belongs to the elongation factor P family.

The protein localises to the cytoplasm. It functions in the pathway protein biosynthesis; polypeptide chain elongation. In terms of biological role, involved in peptide bond synthesis. Stimulates efficient translation and peptide-bond synthesis on native or reconstituted 70S ribosomes in vitro. Probably functions indirectly by altering the affinity of the ribosome for aminoacyl-tRNA, thus increasing their reactivity as acceptors for peptidyl transferase. The protein is Elongation factor P of Kocuria rhizophila (strain ATCC 9341 / DSM 348 / NBRC 103217 / DC2201).